The following is a 272-amino-acid chain: Ribosomal RNA small subunit methyltransferase A (272 aa).

S-adenosyl-L-methionine is bound by residues Asn-18, Leu-20, Gly-45, Glu-66, Asp-91, and Asn-113.

The protein belongs to the class I-like SAM-binding methyltransferase superfamily. rRNA adenine N(6)-methyltransferase family. RsmA subfamily.

It localises to the cytoplasm. It catalyses the reaction adenosine(1518)/adenosine(1519) in 16S rRNA + 4 S-adenosyl-L-methionine = N(6)-dimethyladenosine(1518)/N(6)-dimethyladenosine(1519) in 16S rRNA + 4 S-adenosyl-L-homocysteine + 4 H(+). Specifically dimethylates two adjacent adenosines (A1518 and A1519) in the loop of a conserved hairpin near the 3'-end of 16S rRNA in the 30S particle. May play a critical role in biogenesis of 30S subunits. The chain is Ribosomal RNA small subunit methyltransferase A from Yersinia pseudotuberculosis serotype O:1b (strain IP 31758).